The sequence spans 1071 residues: ATP-dependent helicase/deoxyribonuclease subunit B (1071 aa).

This sequence belongs to the helicase family. AddB/RexB type 2 subfamily. Heterodimer of AddA and RexB. It depends on Mg(2+) as a cofactor.

In terms of biological role, the heterodimer acts as both an ATP-dependent DNA helicase and an ATP-dependent, dual-direction single-stranded exonuclease. Recognizes the chi site generating a DNA molecule suitable for the initiation of homologous recombination. This subunit has 5' -&gt; 3' nuclease activity but not helicase activity. In Streptococcus pyogenes serotype M49 (strain NZ131), this protein is ATP-dependent helicase/deoxyribonuclease subunit B.